We begin with the raw amino-acid sequence, 1297 residues long: DNA-directed RNA polymerase subunit beta' (1297 aa).

Zn(2+) contacts are provided by Cys-60, Cys-62, Cys-75, and Cys-78. Mg(2+) is bound by residues Asp-535, Asp-537, and Asp-539. Residues Cys-883, Cys-961, Cys-968, and Cys-971 each coordinate Zn(2+).

It belongs to the RNA polymerase beta' chain family. In terms of assembly, the RNAP catalytic core consists of 2 alpha, 1 beta, 1 beta' and 1 omega subunit. When a sigma factor is associated with the core the holoenzyme is formed, which can initiate transcription. Requires Mg(2+) as cofactor. It depends on Zn(2+) as a cofactor.

The catalysed reaction is RNA(n) + a ribonucleoside 5'-triphosphate = RNA(n+1) + diphosphate. Its function is as follows. DNA-dependent RNA polymerase catalyzes the transcription of DNA into RNA using the four ribonucleoside triphosphates as substrates. The polypeptide is DNA-directed RNA polymerase subunit beta' (Salinispora tropica (strain ATCC BAA-916 / DSM 44818 / JCM 13857 / NBRC 105044 / CNB-440)).